We begin with the raw amino-acid sequence, 142 residues long: Transcription antitermination protein NusB (142 aa).

This sequence belongs to the NusB family.

In terms of biological role, involved in transcription antitermination. Required for transcription of ribosomal RNA (rRNA) genes. Binds specifically to the boxA antiterminator sequence of the ribosomal RNA (rrn) operons. The chain is Transcription antitermination protein NusB from Levilactobacillus brevis (strain ATCC 367 / BCRC 12310 / CIP 105137 / JCM 1170 / LMG 11437 / NCIMB 947 / NCTC 947) (Lactobacillus brevis).